The following is a 62-amino-acid chain: MHCLPIFVILLLLTASGPSVDAQLKTKDDVPLSSFRDHAKSTLRRLQDKQTCCGYRMCVPCG.

The N-terminal stretch at 1–22 is a signal peptide; it reads MHCLPIFVILLLLTASGPSVDA. Residues 23-47 constitute a propeptide that is removed on maturation; sequence QLKTKDDVPLSSFRDHAKSTLRRLQ. 2 cysteine pairs are disulfide-bonded: Cys52–Cys58 and Cys53–Cys61. Residue Pro60 is modified to 4-hydroxyproline. Cys61 is subject to Cysteine amide.

The protein belongs to the conotoxin A superfamily. In terms of tissue distribution, expressed by the venom duct.

It is found in the secreted. This Conus textile (Cloth-of-gold cone) protein is Conotoxin TxIC.